The following is a 1031-amino-acid chain: Exportin-T (1031 aa).

Belongs to the exportin family.

The protein localises to the nucleus. It localises to the cytoplasm. In terms of biological role, tRNA nucleus export receptor which facilitates tRNA translocation across the nuclear pore complex. Involved in pre-tRNA splicing, probably by affecting the interaction of pre-tRNA with splicing endonuclease. This Emericella nidulans (strain FGSC A4 / ATCC 38163 / CBS 112.46 / NRRL 194 / M139) (Aspergillus nidulans) protein is Exportin-T (los1).